The following is a 737-amino-acid chain: Photosystem I P700 chlorophyll a apoprotein A2 (737 aa).

8 helical membrane passes run 46 to 69 (IFAS…FHVA), 135 to 158 (LYNG…LHLQ), 175 to 199 (LNHH…HVAI), 273 to 291 (IAHH…GHMY), 330 to 353 (LHFQ…QHMY), 369 to 395 (AALY…IFLV), 417 to 439 (AIIS…LYVH), and 520 to 538 (FLVH…LILV). 2 residues coordinate [4Fe-4S] cluster: Cys562 and Cys571. 2 helical membrane passes run 578-599 (AFYL…YWHW) and 646-668 (LSVW…MFLI). His657, Met665, and Tyr673 together coordinate chlorophyll a. A phylloquinone-binding site is contributed by Trp674. Residues 710–730 (LVGLAHFAVGYIVTYAAFLIA) form a helical membrane-spanning segment.

This sequence belongs to the PsaA/PsaB family. As to quaternary structure, the PsaA/B heterodimer binds the P700 chlorophyll special pair and subsequent electron acceptors. PSI consists of a core antenna complex that captures photons, and an electron transfer chain that converts photonic excitation into a charge separation. The eukaryotic PSI reaction center is composed of at least 11 subunits. P700 is a chlorophyll a/chlorophyll a' dimer, A0 is one or more chlorophyll a, A1 is one or both phylloquinones and FX is a shared 4Fe-4S iron-sulfur center. is required as a cofactor.

It is found in the plastid. Its subcellular location is the cyanelle thylakoid membrane. The catalysed reaction is reduced [plastocyanin] + hnu + oxidized [2Fe-2S]-[ferredoxin] = oxidized [plastocyanin] + reduced [2Fe-2S]-[ferredoxin]. Its function is as follows. PsaA and PsaB bind P700, the primary electron donor of photosystem I (PSI), as well as the electron acceptors A0, A1 and FX. PSI is a cytochrome c6-ferredoxin oxidoreductase, converting photonic excitation into a charge separation, which transfers an electron from the donor P700 chlorophyll pair to the spectroscopically characterized acceptors A0, A1, FX, FA and FB in turn. Oxidized P700 is reduced on the lumenal side of the thylakoid membrane by cytochrome c6. This Cyanophora paradoxa protein is Photosystem I P700 chlorophyll a apoprotein A2.